A 398-amino-acid polypeptide reads, in one-letter code: MKQYNYPIVKTLLDTDAYKFYMQQAVFYHYKNVDVVAEFICRGPNILGCYSHILLDQINMMSSLSLSHEEYLYMTTFPFFKKEYLHWLKKFRYNITQVKVDNYHGQLHIRISGLWKEVILWEVPILSLISEIFHRHCYPEITSNIAVQHLNKKLKEFFKKNRDVDLSRLKIVDFGTRRRFSYDVQYSIIKRLKDTFPFLIGSSNYHISRILKLLPVGTQAHEWFQAHQQISSNLRNSQTLALKTWLSQYNQHLSIALTDCITMDSFLRDFNLFFSKSYQGIRHDSGDPVKWGEKAIEHYERLGIDPTTKTLLFSDNLNFRKMISLYKKFNNRVNIIFGIGTKLTCDIPNVKPLNIVIKLVKCNGKPVAKLSDSPGKTFCLDRNFIKSLCKAFDLSLTV.

At H221 the chain carries Phosphohistidine; by autocatalysis.

This sequence belongs to the NAPRTase family. In terms of processing, transiently phosphorylated on a His residue during the reaction cycle. Phosphorylation strongly increases the affinity for substrates and increases the rate of nicotinate D-ribonucleotide production. Dephosphorylation regenerates the low-affinity form of the enzyme, leading to product release.

It catalyses the reaction nicotinate + 5-phospho-alpha-D-ribose 1-diphosphate + ATP + H2O = nicotinate beta-D-ribonucleotide + ADP + phosphate + diphosphate. It functions in the pathway cofactor biosynthesis; NAD(+) biosynthesis; nicotinate D-ribonucleotide from nicotinate: step 1/1. Its function is as follows. Catalyzes the synthesis of beta-nicotinate D-ribonucleotide from nicotinate and 5-phospho-D-ribose 1-phosphate at the expense of ATP. The protein is Nicotinate phosphoribosyltransferase of Buchnera aphidicola subsp. Schizaphis graminum (strain Sg).